A 338-amino-acid chain; its full sequence is ATP synthase subunit a (338 aa).

A helical membrane pass occupies residues 15 to 35 (IAVLVMPLLLGFGAPIYAAAE). The disordered stretch occupies residues 45 to 66 (AAAVHTDEAHGEAGEHAEGGHG). Over residues 49 to 65 (HTDEAHGEAGEHAEGGH) the composition is skewed to basic and acidic residues. A run of 7 helical transmembrane segments spans residues 109 to 129 (HVVFMWLAALILLLVFGYVGN), 174 to 194 (LLTVFVFILVLNLLGLIPYGA), 199 to 219 (NINVTLTLSVFTFFITQVSAI), 238 to 258 (ALWIIMIPIEVIGLFTKPFAL), 262 to 282 (LFANMTAGHIIILSLIFISFI), 287 to 307 (IVAIFVSVPFSIFIYLLEIFV), and 308 to 328 (SFLQAFIFTMLSALFIGLGSA).

Belongs to the ATPase A chain family. In terms of assembly, F-type ATPases have 2 components, CF(1) - the catalytic core - and CF(0) - the membrane proton channel. CF(1) has five subunits: alpha(3), beta(3), gamma(1), delta(1), epsilon(1). CF(0) has four main subunits: a, b, b' and c.

It localises to the cell inner membrane. In terms of biological role, key component of the proton channel; it plays a direct role in the translocation of protons across the membrane. This chain is ATP synthase subunit a, found in Chlorobium phaeobacteroides (strain BS1).